A 500-amino-acid polypeptide reads, in one-letter code: Cytochrome P450 2D28 (500 aa).

Cys446 lines the heme pocket.

The protein belongs to the cytochrome P450 family. It depends on heme as a cofactor.

The protein resides in the endoplasmic reticulum membrane. Its subcellular location is the microsome membrane. The protein is Cytochrome P450 2D28 (CYP2D28A) of Mesocricetus auratus (Golden hamster).